A 422-amino-acid chain; its full sequence is ATP-dependent Clp protease ATP-binding subunit ClpX 1 (422 aa).

The 54-residue stretch at 4–57 (DRKNRESGKLLYCSFCGKSQHEVRKLIAGPAVFVCDECVELCNDIIREDLQGSE) folds into the ClpX-type ZB domain. Zn(2+) is bound by residues cysteine 16, cysteine 19, cysteine 38, and cysteine 41. An ATP-binding site is contributed by 120 to 127 (PTGSGKTL).

It belongs to the ClpX chaperone family. As to quaternary structure, component of the ClpX-ClpP complex. Forms a hexameric ring that, in the presence of ATP, binds to fourteen ClpP subunits assembled into a disk-like structure with a central cavity, resembling the structure of eukaryotic proteasomes.

Its function is as follows. ATP-dependent specificity component of the Clp protease. It directs the protease to specific substrates. Can perform chaperone functions in the absence of ClpP. This chain is ATP-dependent Clp protease ATP-binding subunit ClpX 1, found in Methylococcus capsulatus (strain ATCC 33009 / NCIMB 11132 / Bath).